The chain runs to 1126 residues: [F-actin]-monooxygenase mical2 (1126 aa).

The tract at residues 2–494 (GENGDDKHGR…KHLFITNELQ (493 aa)) is monooxygenase domain. Residues Cys-97, 116–118 (EKR), 123–125 (RNN), Phe-183, Tyr-299, and Asp-399 contribute to the FAD site. The 104-residue stretch at 516 to 619 (DVRPNKLLIW…MVLYLSKFYE (104 aa)) folds into the Calponin-homology (CH) domain. A Nuclear localization signal motif is present at residues 659-680 (RKRVPKDEKTSDDSDLNKRRKT). Disordered stretches follow at residues 748–830 (AVTA…SLSS) and 892–935 (PSLG…SGMS). The segment covering 792-803 (VRPPVQPRPGPA) has biased composition (pro residues). Residues 805-824 (PTRELRVVERAQSHPDDLGR) show a composition bias toward basic and acidic residues. A compositionally biased stretch (low complexity) spans 918–932 (SSSDSSPSSAPSRKS). The region spanning 1001-1063 (DTCYFCKRRV…QPHFMHSVTK (63 aa)) is the LIM zinc-binding domain. Residues Cys-1003, Cys-1006, His-1024, Cys-1027, Cys-1030, Cys-1033, Cys-1053, and His-1056 each contribute to the Zn(2+) site.

Belongs to the Mical family. The cofactor is FAD.

It is found in the nucleus. The protein localises to the cytoplasm. It catalyses the reaction L-methionyl-[F-actin] + NADPH + O2 + H(+) = L-methionyl-(R)-S-oxide-[F-actin] + NADP(+) + H2O. Nuclear monooxygenase that promotes depolymerization of F-actin by mediating oxidation of specific methionine residues on actin and regulates the srf signaling. Acts by modifying nuclear actin subunits through the addition of oxygen to form methionine-sulfoxide, leading to promote actin filament severing and prevent repolymerization. Acts as a key regulator of the srf signaling pathway elicited by nerve growth factor and serum: mediates oxidation and subsequent depolymerization of nuclear actin, leading to increase mkl1/mrtf-a presence in the nucleus and promote srf:mkl1/mrtf-a-dependent gene transcription. The chain is [F-actin]-monooxygenase mical2 from Xenopus tropicalis (Western clawed frog).